Here is a 2193-residue protein sequence, read N- to C-terminus: Protein sidekick-1 (2193 aa).

Residues 1-23 show a composition bias toward low complexity; it reads MARARPSVAGGGVAAPPERAGPG. Residues 1 to 56 form a disordered region; sequence MARARPSVAGGGVAAPPERAGPGRPRRSRTGHHCDPECPGLRAAPRTPGPGAGRRA. Ig-like C2-type domains are found at residues 86-168, 173-259, 275-363, 368-458, and 462-551; these read PYFK…SEIQ, GNFM…SPFI, PIIV…AFLS, PYFT…LDVT, and PAFT…AMLT. A disulfide bridge connects residues Cys-108 and Cys-151. N-linked (GlcNAc...) asparagine glycans are attached at residues Asn-123, Asn-253, and Asn-283. Intrachain disulfides connect Cys-297–Cys-344, Cys-390–Cys-440, and Cys-483–Cys-535. N-linked (GlcNAc...) asparagine glycans are attached at residues Asn-532, Asn-545, and Asn-554. The region spanning 556 to 645 is the Ig-like C2-type 6 domain; the sequence is TSIVHPPEDR…GSDSRTARLE (90 aa). Cys-577 and Cys-629 are joined by a disulfide. Fibronectin type-III domains lie at 652 to 748, 753 to 849, 854 to 952, 956 to 1050, 1054 to 1153, 1158 to 1256, 1261 to 1358, 1362 to 1456, 1461 to 1558, 1563 to 1681, 1686 to 1782, 1786 to 1881, and 1884 to 1982; these read PPQN…LPEE, PPKN…TLQG, PPQN…THED, AVGH…VPPD, APSN…TLQA, APTS…TRES, APEN…TKDD, PPVR…TEKR, PPRE…TLQD, PPGS…VGEA, APQN…THQA, PPSF…AGPA, and SPGS…SAQA. N-linked (GlcNAc...) asparagine glycans are attached at residues Asn-764, Asn-803, Asn-864, Asn-997, and Asn-1006. 2 N-linked (GlcNAc...) asparagine glycosylation sites follow: Asn-1264 and Asn-1315. N-linked (GlcNAc...) asparagine glycans are attached at residues Asn-1636, Asn-1730, Asn-1801, and Asn-1875. A helical transmembrane segment spans residues 1992 to 2012; that stretch reads FLLVMALSSLLLILLVVFVLV. The Cytoplasmic portion of the chain corresponds to 2013-2193; that stretch reads LHGQSKKYKS…APLTGFSSFV (181 aa). Residues 2057-2080 are disordered; sequence STFSKKNGTRSPPRPSPGGLHYSD. A PDZ-binding motif is present at residues 2187 to 2193; sequence TGFSSFV.

It belongs to the sidekick family. As to quaternary structure, homodimer; mediates homophilic interactions to promote cell adhesion. Interacts (via PDZ-binding motif) with MAGI1, MAGI2, DLG2, DLG3 and DLG4. In terms of assembly, does not mediate homophilic interactions. Expressed by non-overlapping subsets of retinal neurons. Sdk1 and Sdk2 are expressed in non-overlapping subsets of interneurons and retinal ganglion cells (RGCs) that form synapses in distinct inner plexiform layer (IPL) sublaminae (at protein level).

The protein resides in the cell membrane. The protein localises to the synapse. Its function is as follows. Adhesion molecule that promotes lamina-specific synaptic connections in the retina. Expressed in specific subsets of interneurons and retinal ganglion cells (RGCs) and promotes synaptic connectivity via homophilic interactions. The sequence is that of Protein sidekick-1 from Mus musculus (Mouse).